Consider the following 83-residue polypeptide: Cytochrome c5 (83 aa).

Residues Cys-15, Cys-18, His-19, and Met-59 each contribute to the heme c site. The cysteines at positions 65 and 68 are disulfide-linked.

It belongs to the cytochrome c family. Homodimer. Binds 1 heme c group covalently per subunit.

In terms of biological role, it is unreactive with cytochrome c reductase or oxidase. The polypeptide is Cytochrome c5 (Azotobacter vinelandii).